A 1915-amino-acid chain; its full sequence is Methylcytosine dioxygenase tet3-B (1915 aa).

Residues 28–49 (RLRVSEMPSELNGGGDGSKGDG) are disordered. A CXXC-type zinc finger spans residues 61 to 102 (SNKKRKRCGVCVPCLRKEPCGTCYNCVNRSTSHQICKMRKCE). The Zn(2+) site is built by C68, C71, C74, C80, C83, C86, C96, and C101. The segment covering 629-638 (PNSQQAPVSK) has biased composition (polar residues). Disordered stretches follow at residues 629-679 (PNSQ…RVKE), 776-806 (GRCP…VPGQ), and 831-880 (FSLP…LSNN). The segment covering 664 to 676 (KPPRKQVQIKKPR) has biased composition (basic residues). Over residues 779–793 (PTPSTGDSSSGQGDS) the composition is skewed to low complexity. 2 stretches are compositionally biased toward polar residues: residues 838-854 (VPSQ…TSGV) and 864-880 (QLPS…LSNN). The Zn(2+) site is built by C974, C976, C1034, H1060, and C1062. Residue R1102 coordinates 2-oxoglutarate. The Zn(2+) site is built by C1112, C1114, C1130, C1139, and C1199. 2-oxoglutarate is bound at residue C1215. H1221 lines the Zn(2+) pocket. 2 residues coordinate Fe cation: H1223 and D1225. Residue H1257 coordinates 2-oxoglutarate. Disordered stretches follow at residues 1298–1356 (LSEP…QTKP), 1469–1516 (GMNQ…APME), and 1719–1753 (PAVN…VKEE). Basic and acidic residues predominate over residues 1308–1339 (RQLDAKKATAEKKKLQKEKLVSPDKTKQEPSD). Residues 1340–1355 (TKTCQQNPGVPQQQTK) are compositionally biased toward polar residues. The segment covering 1482-1491 (NYRRSSEVPH) has biased composition (basic and acidic residues). Composition is skewed to polar residues over residues 1494–1503 (SLQNSNSQKS) and 1720–1732 (AVNS…SQNH). A Fe cation-binding site is contributed by H1794. 1809-1811 (RIS) is a binding site for 2-oxoglutarate. Residues 1827 to 1860 (LALWEAKMKQLAERARVKEEEAAKLGIKQEVKSL) are a coiled coil.

It belongs to the TET family. Fe(2+) serves as cofactor. Requires Zn(2+) as cofactor. Detected in embryo (at protein level). Detected in embryonic head, in developing brain and eye.

Its subcellular location is the nucleus. The protein localises to the chromosome. It carries out the reaction a 5-methyl-2'-deoxycytidine in DNA + 2-oxoglutarate + O2 = a 5-hydroxymethyl-2'-deoxycytidine in DNA + succinate + CO2. The catalysed reaction is a 5-hydroxymethyl-2'-deoxycytidine in DNA + 2-oxoglutarate + O2 = a 5-formyl-2'-deoxycytidine in DNA + succinate + CO2 + H2O. It catalyses the reaction a 5-formyl-2'-deoxycytidine in DNA + 2-oxoglutarate + O2 = a 5-carboxyl-2'-deoxycytidine in DNA + succinate + CO2 + H(+). Functionally, dioxygenase that catalyzes the conversion of the modified genomic base 5-methylcytosine (5mC) into 5-hydroxymethylcytosine (5hmC) and plays a key role in epigenetic chromatin reprogramming during embryonic development. Conversion of 5mC into 5hmC probably constitutes the first step in cytosine demethylation. Selectively binds to the promoter region of target genes and contributes to regulate the expression of numerous developmental genes, including pax6, rax, sox9 and six3. May also contribute to the regulation of target genes in ways that do not require its enzyme activity. The protein is Methylcytosine dioxygenase tet3-B of Xenopus laevis (African clawed frog).